Reading from the N-terminus, the 55-residue chain is Large ribosomal subunit protein bL33 (55 aa).

Belongs to the bacterial ribosomal protein bL33 family.

This Orientia tsutsugamushi (strain Boryong) (Rickettsia tsutsugamushi) protein is Large ribosomal subunit protein bL33.